The chain runs to 407 residues: Protein ORF45 (407 aa).

Over residues 1 to 10 (MAMFVRTSSS) the composition is skewed to polar residues. 3 disordered regions span residues 1–183 (MAMF…SDDE), 196–318 (GTGA…QRQP), and 332–407 (SSGS…PWLD). Serine 41 is subject to Phosphoserine; by host TBK1 and IKKE. Positions 91–115 (SEYDEDEEDEDEEENDDVQEEDEPE) are enriched in acidic residues. Positions 128–139 (LRPRPLARRAHT) are enriched in basic residues. Serine 162 carries the post-translational modification Phosphoserine; by host TBK1 and IKKE. The span at 205–218 (ASRNSVPGTQSSPY) shows a compositional bias: polar residues. Residues 284-294 (VLSQRIGLMDV) carry the Nuclear export signal motif. A Nuclear localization signal motif is present at residues 297–300 (KRKR). Low complexity-rich tracts occupy residues 342-353 (SSAVSVIVSPSS) and 360-383 (TQSPSTSAHSISSGSTTTAGSRCS).

In terms of assembly, interacts with host IRF7. Interacts with host RPS6KA1. Interacts with host RAB11FIP5; this interaction results in the lysosomal degradation of ORF45 and the inhibition of viral particle release. Interacts with host p53/TP53; this interaction down-regulates p53/TP53 signaling pathway. Interacts with the N-terminal part of host NLRP1; relieving autoinhibition of the NLRP1 inflammasome. Phosphorylated on Ser-41 and Ser-162 by host IKBKE and TBK1.

It is found in the virion tegument. It localises to the host cytoplasm. Its subcellular location is the host nucleus. The protein localises to the host Golgi apparatus. Functionally, prevents the establishment of cellular antiviral state by blocking virus-induced phosphorylation and activation of host interferon regulatory factor 7/IRF7, a transcription factor critical for the induction of interferons alpha and beta. Mechanistically, ORF45 competes with the associated IRF7 and inhibits its phosphorylation by IKBKE or TBK1 by acting as an alternative substrate. Acts as an activator of the NLRP1 inflammasome via interaction with the N-terminal part of host NLRP1: interaction promotes translocation of the N-terminal part of NLRP1 into the nucleus, relieving autoinhibition of the NLRP1 inflammasome and leading to its activation. Also plays a role in promoting the late transcription and translation of viral lytic genes by constitutively activating host extracellular signal-regulated kinase (ERK)-p90 ribosomal S6 kinase/RPS6KA1. In addition, supports the viral replication cycle by modulating host p53/TP53 signaling pathway. Interacts with host p53/TP53 and prevents its interaction with the deubiquitinase USP7, leading to sequestration of P53/TP53 in the host cytoplasm thereby diminishing its transcriptional activity. The protein is Protein ORF45 (ORF45) of Homo sapiens (Human).